An 87-amino-acid polypeptide reads, in one-letter code: Diazepam-binding inhibitor-like 5 (87 aa).

Positions 2–87 (SQVEFEMACA…VEELKKNETC (86 aa)) constitute an ACB domain. Residues 29-33 (YSFYK), lysine 55, and tyrosine 74 each bind an acyl-CoA.

This sequence belongs to the ACBP family. As to expression, testis.

It localises to the cytoplasm. Its function is as follows. May be involved in the energy metabolism of the mature sperm. The sequence is that of Diazepam-binding inhibitor-like 5 (Dbil5) from Rattus norvegicus (Rat).